We begin with the raw amino-acid sequence, 1792 residues long: Brefeldin A-inhibited guanine nucleotide-exchange protein 2 (1792 aa).

Met-1 bears the N-acetylmethionine mark. Residues 2-224 (QESQTKSMFV…KPQSPVIQAT (223 aa)) form a DCB; DCB:DCB domain and DCB:HUS domain interaction region. The segment at 207–294 (ELEKPMQSKP…SRGTDSGAQE (88 aa)) is disordered. Phosphoserine occurs at positions 214, 218, and 227. The segment covering 214-225 (SKPQSPVIQATA) has biased composition (polar residues). A compositionally biased stretch (polar residues) spans 233 to 243 (LKQSQAQSKPT). Thr-244 is subject to Phosphothreonine. A phosphoserine mark is found at Ser-355 and Ser-356. The tract at residues 515–535 (ADAQCVVDIYVNYDCDLNAAN) is HUS; DCB:HUS domain interaction. Ser-621 bears the Phosphoserine mark. Thr-623 is modified (phosphothreonine). Ser-624 is subject to Phosphoserine. Thr-633 carries the post-translational modification Phosphothreonine. The 132-residue stretch at 661-792 (FNKKPKRGIQ…IIMLTTDLHS (132 aa)) folds into the SEC7 domain. Phosphoserine is present on residues Ser-707, Ser-1518, Ser-1520, Ser-1521, Ser-1532, Ser-1535, Ser-1541, and Ser-1789.

Homodimer. Interacts with ARFGEF1/BIG1; both proteins are probably part of the same or very similar macromolecular complexes. Interacts with PRKAR1A, PRKAR2A, PRKAR1B, PRKAR2B, PPP1CC, PDE3A, TNFRSF1A, MYCBP and EXOC7. Interacts with GABRB1, GABRB2 and GABRB3. In vitro phosphorylated by PKA reducing its GEF activity and dephosphorylated by phosphatase PP1.

It localises to the cytoplasm. Its subcellular location is the membrane. The protein localises to the golgi apparatus. The protein resides in the perinuclear region. It is found in the trans-Golgi network. It localises to the endosome. Its subcellular location is the cytoskeleton. The protein localises to the microtubule organizing center. The protein resides in the centrosome. It is found in the cell projection. It localises to the dendrite. Its subcellular location is the cytoplasmic vesicle. The protein localises to the synapse. Inhibited by brefeldin A. Functionally, promotes guanine-nucleotide exchange on ARF1 and ARF3 and to a lower extent on ARF5 and ARF6. Promotes the activation of ARF1/ARF5/ARF6 through replacement of GDP with GTP. Involved in the regulation of Golgi vesicular transport. Required for the integrity of the endosomal compartment. Involved in trafficking from the trans-Golgi network (TGN) to endosomes and is required for membrane association of the AP-1 complex and GGA1. Seems to be involved in recycling of the transferrin receptor from recycling endosomes to the plasma membrane. Probably is involved in the exit of GABA(A) receptors from the endoplasmic reticulum. Involved in constitutive release of tumor necrosis factor receptor 1 via exosome-like vesicles; the function seems to involve PKA and specifically PRKAR2B. Proposed to act as A kinase-anchoring protein (AKAP) and may mediate crosstalk between Arf and PKA pathways. The protein is Brefeldin A-inhibited guanine nucleotide-exchange protein 2 (Arfgef2) of Mus musculus (Mouse).